The sequence spans 452 residues: Retinoid-inducible serine carboxypeptidase (452 aa).

The first 26 residues, 1 to 26 (MELALRRSPVPRWLLLLPLLLGLNAG), serve as a signal peptide directing secretion. N-linked (GlcNAc...) asparagine glycans are attached at residues Asn-64 and Asn-126. The active site involves Ser-167. Asn-362 carries an N-linked (GlcNAc...) asparagine glycan. Catalysis depends on residues Asp-371 and His-431.

This sequence belongs to the peptidase S10 family.

It is found in the secreted. Functionally, may be involved in vascular wall and kidney homeostasis. This Homo sapiens (Human) protein is Retinoid-inducible serine carboxypeptidase (SCPEP1).